A 316-amino-acid polypeptide reads, in one-letter code: tRNA methyltransferase 10 homolog B (316 aa).

A coiled-coil region spans residues 73–97 (EKIVAAKKSKRKQEKERRKANRAEN). A disordered region spans residues 77–98 (AAKKSKRKQEKERRKANRAENP). Residues 113–310 (TKDKLLEAKH…KGVSSGKGYI (198 aa)) form the SAM-dependent MTase TRM10-type domain.

It belongs to the class IV-like SAM-binding methyltransferase superfamily. TRM10 family.

It catalyses the reaction guanosine(9) in tRNA + S-adenosyl-L-methionine = N(1)-methylguanosine(9) in tRNA + S-adenosyl-L-homocysteine + H(+). Functionally, S-adenosyl-L-methionine-dependent guanine N(1)-methyltransferase that catalyzes the formation of N(1)-methylguanine at position 9 (m1G9) in tRNAs. Probably not able to catalyze formation of N(1)-methyladenine at position 9 (m1A9) in tRNAs. The protein is tRNA methyltransferase 10 homolog B (TRMT10B) of Homo sapiens (Human).